Here is a 294-residue protein sequence, read N- to C-terminus: 4-hydroxy-tetrahydrodipicolinate synthase (294 aa).

Thr-45 serves as a coordination point for pyruvate. The Proton donor/acceptor role is filled by Tyr-133. The active-site Schiff-base intermediate with substrate is Lys-161. Ile-203 contributes to the pyruvate binding site.

It belongs to the DapA family. As to quaternary structure, homotetramer; dimer of dimers.

The protein localises to the cytoplasm. The catalysed reaction is L-aspartate 4-semialdehyde + pyruvate = (2S,4S)-4-hydroxy-2,3,4,5-tetrahydrodipicolinate + H2O + H(+). It functions in the pathway amino-acid biosynthesis; L-lysine biosynthesis via DAP pathway; (S)-tetrahydrodipicolinate from L-aspartate: step 3/4. Its function is as follows. Catalyzes the condensation of (S)-aspartate-beta-semialdehyde [(S)-ASA] and pyruvate to 4-hydroxy-tetrahydrodipicolinate (HTPA). This is 4-hydroxy-tetrahydrodipicolinate synthase from Shewanella sp. (strain W3-18-1).